A 352-amino-acid polypeptide reads, in one-letter code: MFAAATKSFVKQVGDGGRLVPVPSLSEADKYQPLSLVVKKKRCFLFPRCKFTSTPFTLKDILLGDREISAGISSYQLLNYEDESDVSLYGRRSNHIVNDVGINVTGSDSIAVKASFGVVTKHEVEVSTLLKEITARKINFDHSLIRQSRSSRKAVLCVVMESIRTTRQCSLSVHAGIRGEAMRFHFMDEQNPKGREKAIVFPAHTTIAFSVFELFIYLDGAFDICVTSVSKGGFEREETTTFAMFYRLRNILFERNRRVMDAISRSQLYLDDLFSDFYDKPLSMTDISLKEGTHIRVNLLNHNIPKGPCILCGMGNLKRETVYGCFQCSVDGVKYVRLHAVPCFDIWHKRMK.

It belongs to the gasdermin family. Interacts with MAP1LC3B; interaction is direct. Interacts with IQGAP1. Interacts with ROCK2. Interacts with TRIOBP. In terms of tissue distribution, in ear, it is detected in the organ of Corti and the spiral ganglion within the cochlea in the sensory areas of the vestibule (cristae ampullares of the semicircular ducts, and maculae of the saccule and utricle) and in the first 3 relays (cochlear nuclei, superior olivary complex and inferior colliculus) of the afferent auditory pathway. Detected in hair cells of the cochlea and vestibule but not in neurons. In the afferent auditory pathway, it is present in the cell bodies of neurons but not in fiber bundles such as the trapezoid body in the brainstem. Also detected in spiral ganglion cells, which form the auditory nerve and project to the cochlear nuclei in the brainstem. Also present in the cochlear nuclei, the superior olive and the inferior colliculus (at protein level). Expressed in all the adult organs tested: brain, eye, inner ear, heart, lung, kidney, liver, intestine, testis and weakly in skeletal muscle.

It is found in the peroxisome membrane. The protein resides in the cell projection. The protein localises to the cilium. Functionally, peroxisome-associated protein required to protect auditory hair cells against noise-induced damage. Acts by regulating noise-induced peroxisome proliferation in auditory hair cells and neurons, and promoting autophagic degradation of damaged peroxisomes (pexophagy). Noise overexposure increases reactive oxygen species (ROS) levels, causing oxidative damage to auditory hair cells and resulting in hearing loss. PJVK acts as a ROS sensor that recruits the autophagy machinery to trigger pexophagy of peroxisomes damaged by oxidative stress. In addition to pexophagy, also required to promote peroxisome proliferation in response to sound overstimulation. The chain is Pejvakin from Mus musculus (Mouse).